A 207-amino-acid chain; its full sequence is MSFAMLRSAPPPGRYLYPEVSPLSEDEDRGSESSGSDEKPCRVHAARCGLQGARRRAGGRRAAGSGPGPGGRPGREPRQRHTANARERDRTNSVNTAFTALRTLIPTEPADRKLSKIETLRLASSYISHLGNVLLVGEACGDGQPCHSGPAFFHSGRAGSPLPPPPPPPPLARDGGENTQPKQICTFCLSNQRKLSKDRDRKTAIRS.

2 disordered regions span residues 1–91 and 151–183; these read MSFA…RDRT and AFFHSGRAGSPLPPPPPPPPLARDGGENTQPKQ. A compositionally biased stretch (basic and acidic residues) spans 73-91; sequence PGREPRQRHTANARERDRT. A bHLH domain is found at 78–130; that stretch reads RQRHTANARERDRTNSVNTAFTALRTLIPTEPADRKLSKIETLRLASSYISHL. Over residues 161–171 the composition is skewed to pro residues; that stretch reads PLPPPPPPPPL.

As to quaternary structure, efficient DNA binding requires dimerization with another bHLH protein. Dimerizes and binds the E-box consensus sequence with E12. Expressed in mesenchymal precursors of cartilage and in connective tissue. Highly expressed in tendons in the limb, tongue and diaphragm and in cartilage of the bronchi.

It localises to the nucleus. In terms of biological role, plays an early essential role in mesoderm formation, as well as a later role in formation of somite-derived chondrogenic lineages. The chain is Basic helix-loop-helix transcription factor scleraxis (Scx) from Mus musculus (Mouse).